The chain runs to 1252 residues: Myosin-3 (1252 aa).

Residues 36–715 (VGVSDLTLLS…TLFALENMRD (680 aa)) form the Myosin motor domain. Position 129 to 136 (129 to 136 (GESGAGKT)) interacts with ATP. A Phosphoserine modification is found at Ser357. An actin-binding region spans residues 404 to 486 (SIGILDIYGF…PGIFAAMNDA (83 aa)). IQ domains follow at residues 719–739 (YNMA…RIDA) and 740–767 (AIRI…AGDK). The region spanning 773-963 (KERRNMSLLG…TILVRHGNPP (191 aa)) is the TH1 domain. 3 disordered regions span residues 988–1086 (KTMK…KTSV), 1106–1136 (YSLP…PSEL), and 1203–1252 (INEP…DDDW). Low complexity predominate over residues 997-1016 (KRTPQALPTSSLAASAAQAA). Polar residues-rich tracts occupy residues 1050-1063 (PVRN…NSKV), 1106-1121 (YSLP…TDSY), and 1203-1219 (INEP…NTDL). Residues 1116-1178 (SQTDSYQAAY…PTSYIVKYNG (63 aa)) enclose the SH3 domain. The span at 1238 to 1252 (SEEDISREEDDDDDW) shows a compositional bias: acidic residues.

This sequence belongs to the TRAFAC class myosin-kinesin ATPase superfamily. Myosin family. Post-translationally, phosphorylation of the TEDS site (Ser-357) is required for the polarization of the actin cytoskeleton. Phosphorylation probably activates the myosin-I ATPase activity.

It is found in the cytoplasm. It localises to the cytoskeleton. The protein resides in the actin patch. Its function is as follows. Type-I myosin implicated in the organization of the actin cytoskeleton. Required for proper actin cytoskeleton polarization. At the cell cortex, assembles in patch-like structures together with proteins from the actin-polymerizing machinery and promotes actin assembly. Functions as actin nucleation-promoting factor (NPF) for the Arp2/3 complex. This Candida glabrata (strain ATCC 2001 / BCRC 20586 / JCM 3761 / NBRC 0622 / NRRL Y-65 / CBS 138) (Yeast) protein is Myosin-3 (MYO3).